Here is a 450-residue protein sequence, read N- to C-terminus: Nuclear hormone receptor family member nhr-40 (450 aa).

The segment at residues 28–103 (GTLCVVCSDF…MGMDPKAIQH (76 aa)) is a DNA-binding region (nuclear receptor). 2 NR C4-type zinc fingers span residues 31–51 (CVVC…CNGC) and 67–91 (CQFS…LKKC). Residues 173-450 (DVKAVIEDLL…LIDQLIIVGL (278 aa)) form the NR LBD domain.

It belongs to the nuclear hormone receptor family. In terms of tissue distribution, isoform b: Expressed in body wall muscle cells, pharyngeal muscles, rectal gland cells, vulval and uterine muscles and neurons in the head and ventral nerve cord. Isoform c: Expressed in body wall muscle cells, neurons in the head, nerve ring, ventral and dorsal nerve cords and epidermal cells in the tail.

It localises to the nucleus. Its function is as follows. Orphan nuclear receptor. Plays a role in morphogenesis and elongation during embryonic and larval development. Plays a role in muscle formation and motility. In Caenorhabditis elegans, this protein is Nuclear hormone receptor family member nhr-40.